Reading from the N-terminus, the 413-residue chain is DNA primase large subunit PriL (413 aa).

Residues Cys-230, Cys-301, Cys-310, and Cys-317 each coordinate [4Fe-4S] cluster. Composition is skewed to basic and acidic residues over residues 340-356 (MEKE…QEEK), 362-381 (KEKQ…EEKG), and 388-413 (KKRE…KKRI). Positions 340-413 (MEKEKEEKEE…KEKQEEKKRI (74 aa)) are disordered.

This sequence belongs to the eukaryotic-type primase large subunit family. In terms of assembly, heterodimer of a small subunit (PriS) and a large subunit (PriL). The cofactor is [4Fe-4S] cluster.

Regulatory subunit of DNA primase, an RNA polymerase that catalyzes the synthesis of short RNA molecules used as primers for DNA polymerase during DNA replication. Stabilizes and modulates the activity of the small subunit, increasing the rate of DNA synthesis, and conferring RNA synthesis capability. The DNA polymerase activity may enable DNA primase to also catalyze primer extension after primer synthesis. May also play a role in DNA repair. This is DNA primase large subunit PriL from Methanosarcina barkeri (strain Fusaro / DSM 804).